Here is a 352-residue protein sequence, read N- to C-terminus: Putative formin-like protein 15b (352 aa).

One can recognise an FH2 domain in the interval 1–350 (MTLFNFIKLF…KDAKEAEMEK (350 aa)).

It belongs to the formin-like family. Class-II subfamily.

This is Putative formin-like protein 15b (FH15B) from Arabidopsis thaliana (Mouse-ear cress).